A 243-amino-acid chain; its full sequence is 1-(5-phosphoribosyl)-5-[(5-phosphoribosylamino)methylideneamino] imidazole-4-carboxamide isomerase (243 aa).

The active-site Proton acceptor is the Asp8. Asp129 serves as the catalytic Proton donor.

Belongs to the HisA/HisF family.

Its subcellular location is the cytoplasm. It carries out the reaction 1-(5-phospho-beta-D-ribosyl)-5-[(5-phospho-beta-D-ribosylamino)methylideneamino]imidazole-4-carboxamide = 5-[(5-phospho-1-deoxy-D-ribulos-1-ylimino)methylamino]-1-(5-phospho-beta-D-ribosyl)imidazole-4-carboxamide. It functions in the pathway amino-acid biosynthesis; L-histidine biosynthesis; L-histidine from 5-phospho-alpha-D-ribose 1-diphosphate: step 4/9. The chain is 1-(5-phosphoribosyl)-5-[(5-phosphoribosylamino)methylideneamino] imidazole-4-carboxamide isomerase from Syntrophotalea carbinolica (strain DSM 2380 / NBRC 103641 / GraBd1) (Pelobacter carbinolicus).